Consider the following 73-residue polypeptide: Serine rich endogenous peptide 14 (73 aa).

Residues 1–31 form the signal peptide; that stretch reads MAAKTSNLVALLLSLFLLLLSISSQVGLGEA. The segment at 44-73 is disordered; it reads VSHPSPPPPHRSMAPPIFVPPSTSHKGQGP. The SCOOP motif motif lies at 59–73; the sequence is PIFVPPSTSHKGQGP. Over residues 64–73 the composition is skewed to polar residues; the sequence is PSTSHKGQGP. The SxS motif essential for MIK2 binding signature appears at 65–67; sequence STS.

It belongs to the serine rich endogenous peptide (SCOOP) phytocytokine family. In terms of assembly, interacts with MIK2 (via extracellular leucine-rich repeat domain); this interaction triggers the formation of complex between MIK2 and the BAK1/SERK3 and SERK4 coreceptors, and subsequent BAK1 activation by phosphorylation. Mostly expressed in seedlings shoots and leaves, and, to a lower extent, in roots, stems, siliques, seeds and flowers.

It is found in the cell membrane. Its subcellular location is the secreted. The protein localises to the extracellular space. It localises to the apoplast. Brassicaceae-specific phytocytokine (plant endogenous peptide released into the apoplast) perceived by MIK2 in a BAK1/SERK3 and SERK4 coreceptors-dependent manner, that modulates various physiological and antimicrobial processes including growth prevention and reactive oxygen species (ROS) response regulation. Inhibits root growth and regulates root meristems. Prevents general growth and development. Exhibits antibacterial effects against Pseudomonas syringae pv. tomato DC3000, Ralstonia solanacearum, Bacillus subtilis and Agrobacterium tumefaciens, thus being an antimicrobial peptide (AMP). This Arabidopsis thaliana (Mouse-ear cress) protein is Serine rich endogenous peptide 14.